A 249-amino-acid polypeptide reads, in one-letter code: 5'-nucleotidase SurE (249 aa).

A divalent metal cation is bound by residues D8, D9, S39, and N91.

Belongs to the SurE nucleotidase family. A divalent metal cation serves as cofactor.

It localises to the cytoplasm. The enzyme catalyses a ribonucleoside 5'-phosphate + H2O = a ribonucleoside + phosphate. Nucleotidase that shows phosphatase activity on nucleoside 5'-monophosphates. This Haemophilus influenzae (strain ATCC 51907 / DSM 11121 / KW20 / Rd) protein is 5'-nucleotidase SurE.